A 459-amino-acid chain; its full sequence is U-box domain-containing protein 75 (459 aa).

Positions 64–138 constitute a U-box domain; it reads AVPAVFICPI…AAWFSRRYTR (75 aa). ARM repeat units lie at residues 188–229 and 231–270; these read QSVT…GVPL and ADAKAALMQPAKVSLLVDMLNEGAVDTKINCVRLIRILME.

As to quaternary structure, interacts with GPA1. As to expression, expressed highly in panicles at flowering time, at moderate levels in vegetative shoot apices, leaf sheaths, leaf blades, and elongating internodes, and at low levels in roots.

It is found in the cell membrane. The enzyme catalyses S-ubiquitinyl-[E2 ubiquitin-conjugating enzyme]-L-cysteine + [acceptor protein]-L-lysine = [E2 ubiquitin-conjugating enzyme]-L-cysteine + N(6)-ubiquitinyl-[acceptor protein]-L-lysine.. It participates in protein modification; protein ubiquitination. In terms of biological role, E3 ubiquitin ligase that may function as positive regulator of brassinosteroid (BR) signaling. Possesses E3 ubiquitin ligase in vitro. Acts together with the heterotrimeric G alpha subunit GPA1 at the plasma membrane to mediate a BR signaling pathway that affects plant growth and development. Does not seem to be involved in gibberellin or cytokinin responses. This chain is U-box domain-containing protein 75, found in Oryza sativa subsp. japonica (Rice).